Here is a 119-residue protein sequence, read N- to C-terminus: DNA-binding protein MmarC7_1157 (119 aa).

A compositionally biased stretch (basic and acidic residues) spans 1–12 (MNPEEIRQRRLQ). The segment at 1-37 (MNPEEIRQRRLQEMQAKAQEQGAANDPEAQRQAQEQQ) is disordered.

It belongs to the PDCD5 family.

The polypeptide is DNA-binding protein MmarC7_1157 (Methanococcus maripaludis (strain C7 / ATCC BAA-1331)).